A 186-amino-acid chain; its full sequence is Peptidyl-tRNA hydrolase (186 aa).

Residue tyrosine 14 coordinates tRNA. The active-site Proton acceptor is the histidine 19. TRNA contacts are provided by tyrosine 64, asparagine 66, and asparagine 112.

The protein belongs to the PTH family. Monomer.

The protein localises to the cytoplasm. The enzyme catalyses an N-acyl-L-alpha-aminoacyl-tRNA + H2O = an N-acyl-L-amino acid + a tRNA + H(+). Hydrolyzes ribosome-free peptidyl-tRNAs (with 1 or more amino acids incorporated), which drop off the ribosome during protein synthesis, or as a result of ribosome stalling. Functionally, catalyzes the release of premature peptidyl moieties from peptidyl-tRNA molecules trapped in stalled 50S ribosomal subunits, and thus maintains levels of free tRNAs and 50S ribosomes. This Lachnospira eligens (strain ATCC 27750 / DSM 3376 / VPI C15-48 / C15-B4) (Eubacterium eligens) protein is Peptidyl-tRNA hydrolase.